Consider the following 270-residue polypeptide: Orotidine 5'-phosphate decarboxylase (270 aa).

Substrate is bound by residues Asp-41, Lys-63–His-65, Asp-95–Thr-104, Tyr-221, and Arg-239. Lys-97 serves as the catalytic Proton donor.

It belongs to the OMP decarboxylase family.

It catalyses the reaction orotidine 5'-phosphate + H(+) = UMP + CO2. Its pathway is pyrimidine metabolism; UMP biosynthesis via de novo pathway; UMP from orotate: step 2/2. The sequence is that of Orotidine 5'-phosphate decarboxylase (URA3) from Candida boidinii (Yeast).